The chain runs to 1240 residues: DNA excision repair protein ERCC-6-like (1240 aa).

Phosphoserine is present on S14. Residues 21-54 form a TPR 1 repeat; it reads YLRYVQEAKEAAKNGDLEESLKLFNLAKDIFPTK. The 169-residue stretch at 110 to 278 folds into the Helicase ATP-binding domain; it reads SLYKDGRKGG…WSLFDFACQG (169 aa). An ATP-binding site is contributed by 123-130; the sequence is DDMGLGKT. The short motif at 229–232 is the DEAH box element; that stretch reads DEAH. One can recognise a Helicase C-terminal domain in the interval 467 to 631; the sequence is FLMSLLERLQ…FTKQELKELF (165 aa). The disordered stretch occupies residues 736 to 760; that stretch reads FPSQQKKKGTEFNKPQPQPSRLLTK. Residues 748-760 show a composition bias toward polar residues; it reads NKPQPQPSRLLTK. A phosphoserine mark is found at S755 and S773. Residues 778-813 are disordered; sequence DQSAESEPQEHSEVHDVTSLQGSHHFNSTSDAGTIA. Polar residues predominate over residues 795-809; it reads TSLQGSHHFNSTSDA. Phosphoserine is present on S821. Residues 845 to 879 are disordered; it reads QKKGLQASPGQEAPSENLGSFHYLPRESSKASLGP. A phosphoserine mark is found at S966, S998, S1001, and S1021. Positions 974-1085 are disordered; it reads KEKSLQSPAA…EVNTSLHSRR (112 aa). Polar residues predominate over residues 978–998; that stretch reads LQSPAANSRAKSALTLSLDSS. Residues 1049–1065 show a composition bias toward polar residues; it reads SVKQFDASTPQSGSNPS. T1057 bears the Phosphothreonine mark. Residues S1092 and S1112 each carry the phosphoserine modification. Residues 1104–1117 are compositionally biased toward acidic residues; sequence MEERLDNSSEEESE. A disordered region spans residues 1104 to 1185; sequence MEERLDNSSE…MPDPPQDLAV (82 aa). Residues 1135-1165 are compositionally biased toward polar residues; sequence EQPSGATLASGNKSSNLTMSEPTSPAPQSSP. A Phosphoserine modification is found at S1172. The stretch at 1191 to 1224 is one TPR 2 repeat; the sequence is YESLVARGKELKECGKIQEALNCLVKALDIKSAD.

The protein belongs to the SNF2/RAD54 helicase family. In terms of assembly, interacts with PLK1, which phosphorylates it. Both proteins are mutually dependent on each other for correct subcellular localization. Interacts (via N-terminal TPR repeat) with BEND3 (via BEN domains 1 and 3); the interaction is direct. Phosphorylation by PLK1 prevents the association with chromosome arms and restricts its localization to the kinetochore-centromere region. As to expression, expressed mainly in the neural tube and heart of 10.5 dpc embryo. Significantly down-regulated after alcohol exposure in embryonic brain and heart, but not in embryonic kidney, liver, or lung.

It localises to the chromosome. The protein localises to the centromere. It is found in the kinetochore. The enzyme catalyses ATP + H2O = ADP + phosphate + H(+). Functionally, DNA helicase that acts as a tension sensor that associates with catenated DNA which is stretched under tension until it is resolved during anaphase. Functions as ATP-dependent DNA translocase. Can promote Holliday junction branch migration (in vitro). This Mus musculus (Mouse) protein is DNA excision repair protein ERCC-6-like (Ercc6l).